A 298-amino-acid polypeptide reads, in one-letter code: Protoheme IX farnesyltransferase (298 aa).

The next 9 membrane-spanning stretches (helical) occupy residues 26–46, 52–72, 98–118, 120–140, 148–168, 174–194, 214–234, 241–261, and 278–298; these read VVGH…PGVP, FWAS…NHFL, VVGF…AFVN, LTAF…TVYL, IVIG…AVTG, ALLL…AYAI, IAFT…AGLM, SGEI…YYAI, and YSLV…YIVL.

It belongs to the UbiA prenyltransferase family. Protoheme IX farnesyltransferase subfamily.

The protein resides in the cell inner membrane. The catalysed reaction is heme b + (2E,6E)-farnesyl diphosphate + H2O = Fe(II)-heme o + diphosphate. Its pathway is porphyrin-containing compound metabolism; heme O biosynthesis; heme O from protoheme: step 1/1. In terms of biological role, converts heme B (protoheme IX) to heme O by substitution of the vinyl group on carbon 2 of heme B porphyrin ring with a hydroxyethyl farnesyl side group. This Methylococcus capsulatus (strain ATCC 33009 / NCIMB 11132 / Bath) protein is Protoheme IX farnesyltransferase.